Consider the following 413-residue polypeptide: Tyrosine--tRNA ligase (413 aa).

Tyr33 is a binding site for L-tyrosine. The 'HIGH' region signature appears at 38-47 (PTADSLHVGH). Residues Tyr162 and Gln166 each coordinate L-tyrosine. The 'KMSKS' region motif lies at 225 to 229 (KFGKT). Lys228 is a binding site for ATP. One can recognise an S4 RNA-binding domain in the interval 346–413 (TSAIDAIVNV…KKKYYLLEIK (68 aa)).

The protein belongs to the class-I aminoacyl-tRNA synthetase family. TyrS type 1 subfamily. Homodimer.

It localises to the cytoplasm. The enzyme catalyses tRNA(Tyr) + L-tyrosine + ATP = L-tyrosyl-tRNA(Tyr) + AMP + diphosphate + H(+). In terms of biological role, catalyzes the attachment of tyrosine to tRNA(Tyr) in a two-step reaction: tyrosine is first activated by ATP to form Tyr-AMP and then transferred to the acceptor end of tRNA(Tyr). This chain is Tyrosine--tRNA ligase, found in Mesoplasma florum (strain ATCC 33453 / NBRC 100688 / NCTC 11704 / L1) (Acholeplasma florum).